The following is a 359-amino-acid chain: Cytochrome c oxidase subunit 2 (359 aa).

Positions Met-1 to Gly-28 are cleaved as a signal peptide. A lipid anchor (S-diacylglycerol cysteine) is attached at Cys-29. Helical transmembrane passes span Val-64–Phe-84 and Val-107–Phe-127. The segment at Pro-168 to Ser-203 is disordered. Residues Asp-177 to Ser-192 are compositionally biased toward basic and acidic residues. The Cu cation site is built by His-244, Cys-285, Glu-287, Cys-289, His-293, and Met-296. A disordered region spans residues Tyr-335–Ala-359.

As to quaternary structure, associates with subunits I, III and IV to form cytochrome c oxidase. The 4 subunit cytochrome c oxidase forms a supercomplex with the menaquinol-cytochrome c reductase complex (cytochrome bc1). It depends on binuclear copper center (CuA) as a cofactor.

It localises to the cell membrane. The catalysed reaction is 4 Fe(II)-[cytochrome c] + O2 + 8 H(+)(in) = 4 Fe(III)-[cytochrome c] + 2 H2O + 4 H(+)(out). Subunits I and II form the functional core of the enzyme complex. Electrons originating in cytochrome c are transferred via heme a and Cu(A) to the binuclear center formed by heme a3 and Cu(B). This Corynebacterium glutamicum (strain ATCC 13032 / DSM 20300 / JCM 1318 / BCRC 11384 / CCUG 27702 / LMG 3730 / NBRC 12168 / NCIMB 10025 / NRRL B-2784 / 534) protein is Cytochrome c oxidase subunit 2 (ctaC).